Reading from the N-terminus, the 86-residue chain is MKEGIHPNYREVLFHDVSNDFKFVTRSTIQTKDTIEHEGKTYPLAKIEVSSESHPFYTGTQKIMDTAGRVEKFRQKFGSKLGAAKK.

This sequence belongs to the bacterial ribosomal protein bL31 family. Type B subfamily. As to quaternary structure, part of the 50S ribosomal subunit.

The polypeptide is Large ribosomal subunit protein bL31B (Cupriavidus metallidurans (strain ATCC 43123 / DSM 2839 / NBRC 102507 / CH34) (Ralstonia metallidurans)).